Consider the following 879-residue polypeptide: MSCVQQAAQHRSKPRGNTRAIGMPPIAHHPAPAAPDIAYRRATRGEQPAVYQGVVVARQQGRMRCVQLDQISRGTGTDAGVRNAQRLRGTNAGLIVEPASAGYSTLRHYIARLQRQALAVFEQAQFFGCIDQHIRIRAHAEASARRGKCPHREHAVAQIRLGDRAQTDDRAAGDDRLQFVRIHVRGVHQTPARIHRRVGQQPLHRTLPGPGQAGIHFTLLFGDMDVDGAIGERHQRRQLRRGDRTQAVRRQPKHRIRQRFQAVSAVVQQACETIDAVNQAALRRAGSGTAEIRMRIEHRQQAETDAGVGGRGGDALGHFAGMRVRRTAHGVVQIVEFADAGEAAFEHFHIRLFGDRLQAVRIEPVDEAVHQLAPAPEAVAAASADFGQPRHAALEGMAVQIAQARQQHVAARVGQGSSGTGLQRGDAALLCRDPHPARPAVGQQRPGGPEHLHLLVSHWTPSIAELIVYTYQTPRACAMHCDVLWHNAQLMTLDAADGGLGIVDDGTVACQQGRIVYAGPAAQAPALQPHATHDCQRRWISPGLIDCHTHLVYAGNRANEFEQRLRGASYADIAAAGGGIVATVRATRAADDAALLAASLPRLDAMLGEGVTTLEIKSGYGLTLDDEIKQLRVARQLAALRKVEVVPTFLGAHAVPPGGDAQRYTDQVCTQMIPAIAAQGLAEAVDVFCEHLAFSHAQAEQVFIAAQAHGLHIKIHAEQLSNQHGAELAARYGALSADHIEYLDQAGIAAMAGAGTVAVLLPGAFYFTRDTQVPPIAALRAAGVPLALATDCNPGTSPLTSPLLAMNMAATLFRMTVDECIAGFTREAARALGRSERLGRLRAGMDCDLAIWDIDAPADLVYRMGFNPLHARVLRGHLC.

A disordered region spans residues 1 to 32 (MSCVQQAAQHRSKPRGNTRAIGMPPIAHHPAP). The unknown stretch occupies residues 1–478 (MSCVQQAAQH…YTYQTPRACA (478 aa)). Residues 479–879 (MHCDVLWHNA…HARVLRGHLC (401 aa)) form an imidazolonepropionase region. Residues histidine 548 and histidine 550 each contribute to the Fe(3+) site. 2 residues coordinate Zn(2+): histidine 548 and histidine 550. Residues arginine 557, tyrosine 620, and histidine 653 each contribute to the 4-imidazolone-5-propanoate site. Tyrosine 620 contributes to the N-formimidoyl-L-glutamate binding site. Histidine 716 lines the Fe(3+) pocket. Histidine 716 contributes to the Zn(2+) binding site. Residue glutamine 719 participates in 4-imidazolone-5-propanoate binding. A Fe(3+)-binding site is contributed by aspartate 791. Position 791 (aspartate 791) interacts with Zn(2+). The N-formimidoyl-L-glutamate site is built by asparagine 793 and glycine 795. Threonine 796 is a binding site for 4-imidazolone-5-propanoate.

Belongs to the metallo-dependent hydrolases superfamily. HutI family. Zn(2+) is required as a cofactor. Fe(3+) serves as cofactor.

Its subcellular location is the cytoplasm. The enzyme catalyses 4-imidazolone-5-propanoate + H2O = N-formimidoyl-L-glutamate. It participates in amino-acid degradation; L-histidine degradation into L-glutamate; N-formimidoyl-L-glutamate from L-histidine: step 3/3. Catalyzes the hydrolytic cleavage of the carbon-nitrogen bond in imidazolone-5-propanoate to yield N-formimidoyl-L-glutamate. It is the third step in the universal histidine degradation pathway. This chain is Imidazolonepropionase (hutI), found in Xanthomonas oryzae pv. oryzae (strain KACC10331 / KXO85).